A 242-amino-acid polypeptide reads, in one-letter code: TGACG-sequence-specific DNA-binding protein TGA-1B (242 aa).

Residues 1 to 125 are disordered; the sequence is EFCDFSGNQA…HSSPNFENNS (125 aa). Residues 18-45 are compositionally biased toward polar residues; the sequence is DTSSPELRQSSSGSDVLNATSSTSSHQV. The span at 66 to 79 shows a compositional bias: basic and acidic residues; the sequence is EGSRESANDNKGLG. A compositionally biased stretch (polar residues) spans 88-125; that stretch reads SPESQGSGNYGSNVSEGLNYPSDSNKSVHSSPNFENNS. In terms of domain architecture, bZIP spans 183-242; it reads DEKKRARLVRNRESAQLSRQRKKHYVEELEDKVRIMHSTIQDLNAKVAYIIAENATLKTQ. A basic motif region spans residues 185-216; the sequence is KKRARLVRNRESAQLSRQRKKHYVEELEDKVR. Residues 225–239 form a leucine-zipper region; sequence LNAKVAYIIAENATL.

It belongs to the bZIP family.

Its subcellular location is the nucleus. In terms of biological role, binds specifically to the DNA sequence 5'-TGACG-3'. The protein is TGACG-sequence-specific DNA-binding protein TGA-1B (TGA1B) of Nicotiana tabacum (Common tobacco).